The sequence spans 639 residues: Threonine--tRNA ligase (639 aa).

The region spanning 1–61 (MIHITLPDGS…TQDSPLSIVT (61 aa)) is the TGS domain. The segment at 242–533 (DHRKLGRELD…LIEEHAGALP (292 aa)) is catalytic. Positions 333, 384, and 510 each coordinate Zn(2+).

The protein belongs to the class-II aminoacyl-tRNA synthetase family. In terms of assembly, homodimer. It depends on Zn(2+) as a cofactor.

The protein localises to the cytoplasm. It carries out the reaction tRNA(Thr) + L-threonine + ATP = L-threonyl-tRNA(Thr) + AMP + diphosphate + H(+). Functionally, catalyzes the attachment of threonine to tRNA(Thr) in a two-step reaction: L-threonine is first activated by ATP to form Thr-AMP and then transferred to the acceptor end of tRNA(Thr). Also edits incorrectly charged L-seryl-tRNA(Thr). In Acidovorax ebreus (strain TPSY) (Diaphorobacter sp. (strain TPSY)), this protein is Threonine--tRNA ligase.